Reading from the N-terminus, the 278-residue chain is uncharacterized protein (278 aa).

10 helical membrane-spanning segments follow: residues 1 to 21 (MLEILMSLTAAICWAFNGIAY), 30 to 50 (AFTANFHRTLFATVYFLPLAL), 56 to 76 (VVIDLQTALVLVISAMLSFYI), 92 to 112 (IALPASSTYPVYVVLLSTVIY), 116 to 136 (LSLNALISAILVFVAVYIIYG), 146 to 166 (LFYALLAAFSWALAILTLDFL), 170 to 190 (LPVSIVAFVRLLLCLILLSFT), 209 to 229 (GIFLLLGIMLFITAIKVSSSW), 230 to 250 (NVVQPSSTSPVFAAIFGAIFL), and 258 to 278 (LVAGIFVIILAILLLLLPPLQ). EamA domains follow at residues 12–136 (ICWA…IIYG) and 154–274 (FSWA…LLLL).

The protein belongs to the EamA transporter family.

It is found in the cell membrane. This is an uncharacterized protein from Archaeoglobus fulgidus (strain ATCC 49558 / DSM 4304 / JCM 9628 / NBRC 100126 / VC-16).